Consider the following 375-residue polypeptide: Succinyl-diaminopimelate desuccinylase (375 aa).

Histidine 66 is a Zn(2+) binding site. Aspartate 68 is an active-site residue. A Zn(2+)-binding site is contributed by aspartate 99. The active-site Proton acceptor is the glutamate 133. The Zn(2+) site is built by glutamate 134, glutamate 162, and histidine 348.

It belongs to the peptidase M20A family. DapE subfamily. In terms of assembly, homodimer. Zn(2+) serves as cofactor. The cofactor is Co(2+).

It carries out the reaction N-succinyl-(2S,6S)-2,6-diaminopimelate + H2O = (2S,6S)-2,6-diaminopimelate + succinate. It participates in amino-acid biosynthesis; L-lysine biosynthesis via DAP pathway; LL-2,6-diaminopimelate from (S)-tetrahydrodipicolinate (succinylase route): step 3/3. Catalyzes the hydrolysis of N-succinyl-L,L-diaminopimelic acid (SDAP), forming succinate and LL-2,6-diaminopimelate (DAP), an intermediate involved in the bacterial biosynthesis of lysine and meso-diaminopimelic acid, an essential component of bacterial cell walls. The chain is Succinyl-diaminopimelate desuccinylase from Alkalilimnicola ehrlichii (strain ATCC BAA-1101 / DSM 17681 / MLHE-1).